The following is a 746-amino-acid chain: Protein C-mannosyl-transferase DPY19L1 (746 aa).

The segment at 1-68 (MVLQARSKHR…RAETAAPAPD (68 aa)) is disordered. The span at 14 to 27 (PRPPRPARSSPPPL) shows a compositional bias: pro residues. Helical transmembrane passes span 93–113 (STLL…TQLF), 139–159 (YSYF…WMIM), 227–247 (ACFY…LFFI), 248–268 (YGTY…CFFF), 308–328 (YRGS…PWQF), 329–349 (AQFV…VGYI), 357–377 (IIYT…GNSM), 378–398 (LLTS…AMKP), 405–425 (VSEL…TVTL), 481–501 (LLLP…INDM), 520–540 (GELV…ILIM), and 562–582 (LFGW…VLAA).

This sequence belongs to the dpy-19 family.

The protein resides in the endoplasmic reticulum membrane. It carries out the reaction L-tryptophyl-[protein] + a di-trans,poly-cis-dolichyl beta-D-mannosyl phosphate = C-alpha-D-mannosyl-L-tryptophyl-[protein] + a di-trans,poly-cis-dolichyl phosphate + H(+). Its pathway is protein modification; protein glycosylation. C-mannosyltransferase that mediates the C-mannosylation tryptophan residues on target proteins. The reaction occurs on the luminal side of the endoplasmic reticulum and involves the transfer of a mannose unit from a dolichylphosphate mannose (Dol-P-Man) donor to an acceptor protein containing a WxxW consensus sequence. C-mannosylates the first two tryptophans in the WxxWxxWxxC sequence motif in thrombospondin (TSP) type-1 repeats of UNC5A. Regulates neurite extension during development. The polypeptide is Protein C-mannosyl-transferase DPY19L1 (Dpy19l1) (Rattus norvegicus (Rat)).